The chain runs to 1053 residues: DNA-directed RNA polymerase subunit beta' (1053 aa).

Zn(2+) contacts are provided by Cys-60, Cys-62, Cys-75, and Cys-78. Asp-449, Asp-451, and Asp-453 together coordinate Mg(2+).

The protein belongs to the RNA polymerase beta' chain family. In terms of assembly, the RNAP catalytic core consists of 2 alpha, 1 beta, 1 beta' and 1 omega subunit. When a sigma factor is associated with the core the holoenzyme is formed, which can initiate transcription. Mg(2+) serves as cofactor. Requires Zn(2+) as cofactor.

The catalysed reaction is RNA(n) + a ribonucleoside 5'-triphosphate = RNA(n+1) + diphosphate. DNA-dependent RNA polymerase catalyzes the transcription of DNA into RNA using the four ribonucleoside triphosphates as substrates. The sequence is that of DNA-directed RNA polymerase subunit beta' from Brochothrix thermosphacta (Microbacterium thermosphactum).